The chain runs to 376 residues: Succinyl-diaminopimelate desuccinylase (376 aa).

Zn(2+) is bound at residue histidine 74. Aspartate 76 is an active-site residue. Residue aspartate 105 coordinates Zn(2+). Glutamate 135 acts as the Proton acceptor in catalysis. 3 residues coordinate Zn(2+): glutamate 136, glutamate 164, and histidine 349.

Belongs to the peptidase M20A family. DapE subfamily. Homodimer. Requires Zn(2+) as cofactor. It depends on Co(2+) as a cofactor.

It carries out the reaction N-succinyl-(2S,6S)-2,6-diaminopimelate + H2O = (2S,6S)-2,6-diaminopimelate + succinate. It functions in the pathway amino-acid biosynthesis; L-lysine biosynthesis via DAP pathway; LL-2,6-diaminopimelate from (S)-tetrahydrodipicolinate (succinylase route): step 3/3. Its function is as follows. Catalyzes the hydrolysis of N-succinyl-L,L-diaminopimelic acid (SDAP), forming succinate and LL-2,6-diaminopimelate (DAP), an intermediate involved in the bacterial biosynthesis of lysine and meso-diaminopimelic acid, an essential component of bacterial cell walls. The protein is Succinyl-diaminopimelate desuccinylase of Zymomonas mobilis subsp. mobilis (strain ATCC 31821 / ZM4 / CP4).